A 41-amino-acid polypeptide reads, in one-letter code: MKVKNSLRSLKQRHRDCRVVRRKGRVYVINKTQRRFKARQG.

Belongs to the bacterial ribosomal protein bL36 family.

This Dinoroseobacter shibae (strain DSM 16493 / NCIMB 14021 / DFL 12) protein is Large ribosomal subunit protein bL36.